The chain runs to 443 residues: Probable cytosolic iron-sulfur protein assembly protein 1 (443 aa).

Disordered stretches follow at residues 1-27 (MSDPRPNTLSPLATLTPPSSSRTWQTA) and 95-124 (REEQGGNEDDFTNRRVGGAEDEDGRDDDDE). Residues 8-21 (TLSPLATLTPPSSS) show a composition bias toward low complexity. WD repeat units lie at residues 14-57 (TLTP…LLHS) and 61-103 (GHKR…GNED). Residues 113–124 (AEDEDGRDDDDE) show a composition bias toward acidic residues. WD repeat units lie at residues 135-174 (GHESEIKSLSWSPTGQYLATCSRDKSVWIWEELEDDNFET), 180-219 (EHDGDVKCVAWHPEEDLLASASYDDSVRLYREDSDDWVQV), 221-248 (CIAGKEGHGMTVWWVEFEGSGISGKDFR), 255-294 (SEEQTQHVDSMERSGPRLATCSDDRTVRIWRRKPRERAEN), 323-362 (VHERAIYSVSWSRTTGLIASAGSDGKIIIYKERWRKQTPN), and 391-440 (AHSV…DPPQ).

The protein belongs to the WD repeat CIA1 family.

Essential component of the cytosolic iron-sulfur (Fe/S) protein assembly machinery. Required for the maturation of extramitochondrial Fe/S proteins. The protein is Probable cytosolic iron-sulfur protein assembly protein 1 of Phaeosphaeria nodorum (strain SN15 / ATCC MYA-4574 / FGSC 10173) (Glume blotch fungus).